Here is a 754-residue protein sequence, read N- to C-terminus: 5-methyltetrahydropteroyltriglutamate--homocysteine methyltransferase (754 aa).

5-methyltetrahydropteroyltri-L-glutamate-binding positions include 17 to 20 (RELK) and lysine 117. Residues 431 to 433 (IGS) and glutamate 484 each bind L-homocysteine. L-methionine contacts are provided by residues 431-433 (IGS) and glutamate 484. Residues 515 to 516 (RC) and tryptophan 561 each bind 5-methyltetrahydropteroyltri-L-glutamate. Residue aspartate 599 coordinates L-homocysteine. Residue aspartate 599 participates in L-methionine binding. Residue glutamate 605 participates in 5-methyltetrahydropteroyltri-L-glutamate binding. 3 residues coordinate Zn(2+): histidine 641, cysteine 643, and glutamate 665. Histidine 694 (proton donor) is an active-site residue. Cysteine 726 is a binding site for Zn(2+).

It belongs to the vitamin-B12 independent methionine synthase family. Zn(2+) is required as a cofactor.

The catalysed reaction is 5-methyltetrahydropteroyltri-L-glutamate + L-homocysteine = tetrahydropteroyltri-L-glutamate + L-methionine. The protein operates within amino-acid biosynthesis; L-methionine biosynthesis via de novo pathway; L-methionine from L-homocysteine (MetE route): step 1/1. Catalyzes the transfer of a methyl group from 5-methyltetrahydrofolate to homocysteine resulting in methionine formation. This chain is 5-methyltetrahydropteroyltriglutamate--homocysteine methyltransferase, found in Salmonella dublin (strain CT_02021853).